Reading from the N-terminus, the 443-residue chain is Serine/threonine-protein phosphatase 2A 55 kDa regulatory subunit B beta isoform (443 aa).

WD repeat units follow at residues 22-61, 87-128, 171-209, and 220-260; these read TEAD…KNQV, EIEE…KRPE, AHTY…QSFN, and ELTE…CVTG. Phosphoserine is present on Ser275. 3 WD repeats span residues 279–317, 334–375, and 410–442; these read KLSS…RPIE, ENDC…DVTL, and DFSK…QDKV. Thr298 carries the phosphothreonine modification.

The protein belongs to the phosphatase 2A regulatory subunit B family. In terms of assembly, PP2A consists of a common heterodimeric core enzyme, composed of a 36 kDa catalytic subunit (subunit C) and a 65 kDa constant regulatory subunit (PR65 or subunit A), that associates with a variety of regulatory subunits. Proteins that associate with the core dimer include three families of regulatory subunits B (the R2/B/PR55/B55, R3/B''/PR72/PR130/PR59 and R5/B'/B56 families), the 48 kDa variable regulatory subunit, viral proteins, and cell signaling molecules. Interacts with TOMM22. Interacts with IER5 (via N- and C-terminal regions). In terms of tissue distribution, brain.

The protein resides in the cytoplasm. The protein localises to the cytoskeleton. Its subcellular location is the membrane. In terms of biological role, the B regulatory subunit might modulate substrate selectivity and catalytic activity, and might also direct the localization of the catalytic enzyme to a particular subcellular compartment. This chain is Serine/threonine-protein phosphatase 2A 55 kDa regulatory subunit B beta isoform (PPP2R2B), found in Sus scrofa (Pig).